We begin with the raw amino-acid sequence, 251 residues long: Protection of telomeres homolog 2 (251 aa).

The interval 221 to 251 (ELDNWPEGPPKTFAEAIARANNSRRPRDPPQ) is disordered.

It belongs to the telombin family.

The protein localises to the nucleus. Its subcellular location is the chromosome. The protein resides in the telomere. Functionally, telomeric DNA-binding protein, which binds to two or more single-stranded G-rich repeat sequences (G-strand), with high specificity to the 5'-TTAGGC-3' sequence. In addition, repeat sequence binding requires a 3' single-stranded telomeric overhang. Acts redundantly with pot-1 to negatively regulate telomerase-mediated telomere extension. Also regulates telomere length by the telomerase-independent telomere maintenance pathway called ALT (alternative lengthening of telomeres). Does not appear to have a role in anchoring telomeres to the nuclear envelope. The chain is Protection of telomeres homolog 2 from Caenorhabditis elegans.